The primary structure comprises 373 residues: Protein SENSITIVE TO PROTON RHIZOTOXICITY 2 (373 aa).

2 C2H2-type zinc fingers span residues 217-239 and 327-362; these read HYCQ…MRAH and KHCG…VPAH.

In terms of tissue distribution, expressed at low levels in roots (e.g. root tips and lateral roots), leaves (e.g. at the edge of mature leaves, possibly in hydathodes, and in vascular bundles), flowers (e.g. floral filaments), stems, siliques and cotyledons.

Its subcellular location is the nucleus. In terms of biological role, probable transcription factor. Together with STOP1, plays a critical role in tolerance to major stress factors in acid soils such as proton H(+) and aluminum ion Al(3+). Required for the expression of genes in response to acidic stress (e.g. ALMT1 and MATE), and Al-activated citrate exudation. In Arabidopsis thaliana (Mouse-ear cress), this protein is Protein SENSITIVE TO PROTON RHIZOTOXICITY 2.